The primary structure comprises 269 residues: Achromobactin transport ATP-binding protein CbrD (269 aa).

In terms of domain architecture, ABC transporter spans 4-240 (ITSRELTLGY…ALVKTVFNLD (237 aa)). 36–43 (GSNGCGKS) is an ATP binding site.

The protein belongs to the ABC transporter superfamily.

The protein localises to the cell inner membrane. Part of the binding-protein-dependent transport system CbrABCD for uptake of the siderophore achromobactin. Probably responsible for energy coupling to the transport system. In Dickeya dadantii (strain 3937) (Erwinia chrysanthemi (strain 3937)), this protein is Achromobactin transport ATP-binding protein CbrD (cbrD).